Reading from the N-terminus, the 176-residue chain is Large ribosomal subunit protein uL6 (176 aa).

Residues 151–170 (RPPEPYKGKGVRYADEQVRR) show a composition bias toward basic and acidic residues. Positions 151 to 176 (RPPEPYKGKGVRYADEQVRRKEAKKK) are disordered.

The protein belongs to the universal ribosomal protein uL6 family. Part of the 50S ribosomal subunit.

In terms of biological role, this protein binds to the 23S rRNA, and is important in its secondary structure. It is located near the subunit interface in the base of the L7/L12 stalk, and near the tRNA binding site of the peptidyltransferase center. This Shewanella piezotolerans (strain WP3 / JCM 13877) protein is Large ribosomal subunit protein uL6.